Reading from the N-terminus, the 116-residue chain is Small ribosomal subunit protein bS18c (116 aa).

Residues 1-13 (MKPSFRNTSPSFR) are compositionally biased toward polar residues. Residues 1 to 51 (MKPSFRNTSPSFRNRSKPYFRNRSKPYFRNRSKPSFRNTSKRFSPNQQSFR) are disordered. Basic residues predominate over residues 14 to 34 (NRSKPYFRNRSKPYFRNRSKP). Polar residues predominate over residues 35-49 (SFRNTSKRFSPNQQS).

It belongs to the bacterial ribosomal protein bS18 family. As to quaternary structure, part of the 30S ribosomal subunit.

The protein resides in the plastid. It is found in the chloroplast. This chain is Small ribosomal subunit protein bS18c, found in Cryptomeria japonica (Japanese cedar).